Reading from the N-terminus, the 406-residue chain is Peptidase T (406 aa).

Residue H78 participates in Zn(2+) binding. D80 is an active-site residue. D139 is a binding site for Zn(2+). E173 (proton acceptor) is an active-site residue. Zn(2+) is bound by residues E174, D196, and H378.

This sequence belongs to the peptidase M20B family. Zn(2+) is required as a cofactor.

The protein resides in the cytoplasm. It catalyses the reaction Release of the N-terminal residue from a tripeptide.. Cleaves the N-terminal amino acid of tripeptides. In Clostridium perfringens (strain SM101 / Type A), this protein is Peptidase T.